The primary structure comprises 364 residues: Long-wave-sensitive opsin 1 (364 aa).

At 1–52 the chain is on the extracellular side; it reads MAQRWGPQKLAGGQPQAGFEDSTQASIFTYTNNNATRDPFEGPNYHIAPRWV. Ser22 carries O-linked (GlcNAc) serine glycosylation. The N-linked (GlcNAc...) asparagine glycan is linked to Asn34. The chain crosses the membrane as a helical span at residues 53–77; that stretch reads YHVTSAWMIFVVIASVFTNGLVLAA. Over 78–89 the chain is Cytoplasmic; the sequence is TMRFKKLRHPLN. The chain crosses the membrane as a helical span at residues 90–115; it reads WILVNLAVADLAETIIASTISVVNQI. Residues 116-129 lie on the Extracellular side of the membrane; that stretch reads YGYFVLGHPMCVVE. The cysteines at positions 126 and 203 are disulfide-linked. A helical membrane pass occupies residues 130–149; sequence GYTVSLCGITGLWSLAIISW. At 150–168 the chain is on the cytoplasmic side; the sequence is ERWMVVCKPFGNVRFDAKL. The chain crosses the membrane as a helical span at residues 169-192; it reads AVAGIAFSWIWAAVWTAPPIFGWS. Residues 193 to 218 are Extracellular-facing; it reads RYWPHGLKTSCGPDVFSGSSYPGVQS. A helical transmembrane segment spans residues 219 to 246; the sequence is YMIVLMITCCIIPLSVIVLCYLQVWLAI. The Cytoplasmic segment spans residues 247–268; sequence RAVAKQQKESESTQKAEKEVTR. A helical transmembrane segment spans residues 269-292; it reads MVMVMVFAFCLCWGPYTFFACFAA. At 293–300 the chain is on the extracellular side; sequence AHPGYAFH. A helical membrane pass occupies residues 301 to 325; the sequence is PLVAALPAYFAKSATIYNPIIYVFM. The residue at position 312 (Lys312) is an N6-(retinylidene)lysine. Topologically, residues 326–364 are cytoplasmic; it reads NRQFRNCILQLFGKKVDDSSELSSVSKTEASSVSSVSPA.

This sequence belongs to the G-protein coupled receptor 1 family. Opsin subfamily. In terms of processing, phosphorylated on some or all of the serine and threonine residues present in the C-terminal region. In terms of tissue distribution, the three color pigments are found in the cone photoreceptor cells. Expressed in retina.

Its subcellular location is the membrane. In terms of biological role, visual pigments are the light-absorbing molecules that mediate vision. They consist of an apoprotein, opsin, covalently linked to cis-retinal. In Equus caballus (Horse), this protein is Long-wave-sensitive opsin 1 (OPN1LW).